The chain runs to 699 residues: Elongation factor G (699 aa).

The tr-type G domain occupies 8 to 288 (EDYRNFGIMA…AVVDYLPSPI (281 aa)). Residues 17 to 24 (AHIDAGKT), 86 to 90 (DTPGH), and 140 to 143 (NKMD) contribute to the GTP site.

This sequence belongs to the TRAFAC class translation factor GTPase superfamily. Classic translation factor GTPase family. EF-G/EF-2 subfamily.

The protein localises to the cytoplasm. Functionally, catalyzes the GTP-dependent ribosomal translocation step during translation elongation. During this step, the ribosome changes from the pre-translocational (PRE) to the post-translocational (POST) state as the newly formed A-site-bound peptidyl-tRNA and P-site-bound deacylated tRNA move to the P and E sites, respectively. Catalyzes the coordinated movement of the two tRNA molecules, the mRNA and conformational changes in the ribosome. This is Elongation factor G from Rhizobium meliloti (strain 1021) (Ensifer meliloti).